We begin with the raw amino-acid sequence, 271 residues long: Uridine-cytidine kinase 1-B (271 aa).

24 to 32 is a binding site for ATP; that stretch reads GGTASGKST. 6 residues coordinate substrate: Asp81, Tyr109, His114, Arg163, Arg172, and Gln180. An ATP-binding site is contributed by Asp209. A disordered region spans residues 240-271; the sequence is RSQKRTLPGQGDSGGLLLQGKRTHLESSSRPH. Low complexity predominate over residues 246 to 259; sequence LPGQGDSGGLLLQG. A compositionally biased stretch (basic and acidic residues) spans 262-271; the sequence is THLESSSRPH.

The protein belongs to the uridine kinase family.

The enzyme catalyses uridine + ATP = UMP + ADP + H(+). The catalysed reaction is cytidine + ATP = CMP + ADP + H(+). It participates in pyrimidine metabolism; CTP biosynthesis via salvage pathway; CTP from cytidine: step 1/3. Its pathway is pyrimidine metabolism; UMP biosynthesis via salvage pathway; UMP from uridine: step 1/1. Functionally, phosphorylates uridine and cytidine to uridine monophosphate and cytidine monophosphate. Does not phosphorylate deoxyribonucleosides or purine ribonucleosides. Can use ATP or GTP as a phosphate donor. In Xenopus laevis (African clawed frog), this protein is Uridine-cytidine kinase 1-B (uck1-b).